The sequence spans 1463 residues: Secretory phospholipase A2 receptor (1463 aa).

Residues 1–20 (MLLSPSLLLLLLLGAPRGCA) form the signal peptide. Residues 21 to 1397 (EGVAAALTPE…ALPEKGPSHS (1377 aa)) are Extracellular-facing. The Ricin B-type lectin domain occupies 38–161 (KGIFVIQSES…GSGGGDICEY (124 aa)). 14 disulfides stabilise this stretch: Cys51-Cys64, Cys89-Cys106, Cys178-Cys204, Cys192-Cys219, Cys260-Cys354, Cys330-Cys346, Cys406-Cys501, Cys478-Cys493, Cys617-Cys634, Cys699-Cys796, Cys774-Cys788, Cys840-Cys937, Cys914-Cys929, and Cys1067-Cys1087. Residue Asn93 is glycosylated (N-linked (GlcNAc...) asparagine). The 49-residue stretch at 173 to 221 (THGMPCMFPFQYNHQWHHECTREGREDDLLWCATTSRYERDEKWGFCPD) folds into the Fibronectin type-II domain. 8 C-type lectin domains span residues 238–355 (NSHI…YICK), 385–502 (YNRN…YICK), 522–643 (HGGF…MSLC), 673–797 (GLAS…WICK), 819–938 (YQDA…SICK), 965–1096 (FNYK…GFVC), 1121–1232 (YGNR…GAIC), and 1257–1378 (FKSN…FICK). Residue Asn454 is glycosylated (N-linked (GlcNAc...) asparagine). An N-linked (GlcNAc...) asparagine glycan is attached at Asn1123. Disulfide bonds link Cys1209-Cys1223, Cys1280-Cys1377, and Cys1354-Cys1369. The chain crosses the membrane as a helical span at residues 1398 to 1418 (IIPLAVVLTLIVIVAICTLSF). At 1419–1463 (CIYKHNGGFFRRLAGFRNPYYPATNFSTVYLEENILISDLEKSDQ) the chain is on the cytoplasmic side. The short motif at 1436–1442 (NPYYPAT) is the Endocytosis signal element.

Interacts with sPLA2-IB/PLA2G1B; this interaction mediates intracellular signaling as well as clearance of extracellular sPLA2-IB/PLA2G1B via endocytotic pathway. Interacts with sPLA2-X/PLA2G10; this interaction mediates sPLA2-X/PLA2G10 clearance and inactivation. The secretory phospholipase A2 receptor form may be produced by the action of metalloproteinases. It contains all extracellular domains and only lacks transmembrane and cytosolic regions. It is however unclear whether this form is produced by proteolytic cleavage as suggested by some experiments, or by alternative splicing, as in the case of isoform 2 that shares all characteristics of secretory phospholipase A2 receptor form. Expressed in podocytes (at protein level). Present in lung macrophage (at protein level). Highly expressed in kidney. Also expressed in pancreas, amnion, choriodecidua and placenta. Isoform 2 is expressed at much lower level.

It localises to the cell membrane. The protein resides in the secreted. Functionally, receptor for secretory phospholipase A2 (sPLA2). Acts as a receptor for phospholipase sPLA2-IB/PLA2G1B but not sPLA2-IIA/PLA2G2A. Also able to bind to snake PA2-like toxins. Although its precise function remains unclear, binding of sPLA2 to its receptor participates in both positive and negative regulation of sPLA2 functions as well as clearance of sPLA2. Binding of sPLA2-IB/PLA2G1B induces various effects depending on the cell type, such as activation of the mitogen-activated protein kinase (MAPK) cascade to induce cell proliferation, the production of lipid mediators, selective release of arachidonic acid in bone marrow-derived mast cells. In neutrophils, binding of sPLA2-IB/PLA2G1B can activate p38 MAPK to stimulate elastase release and cell adhesion. May be involved in responses in pro-inflammatory cytokine productions during endotoxic shock. Also has endocytic properties and rapidly internalizes sPLA2 ligands, which is particularly important for the clearance of extracellular sPLA2s to protect their potent enzymatic activities. The soluble secretory phospholipase A2 receptor form is circulating and acts as a negative regulator of sPLA2 functions by blocking the biological functions of sPLA2-IB/PLA2G1B. In podocytes, binding of sPLA2-IB/PLA2G1B can regulate podocyte survival and glomerular homeostasis. This chain is Secretory phospholipase A2 receptor (PLA2R1), found in Homo sapiens (Human).